The sequence spans 288 residues: Energy-coupling factor transporter ATP-binding protein EcfA2 (288 aa).

One can recognise an ABC transporter domain in the interval Ile-3 to Asp-245. Residue Gly-40–Ser-47 participates in ATP binding.

The protein belongs to the ABC transporter superfamily. Energy-coupling factor EcfA family. As to quaternary structure, forms a stable energy-coupling factor (ECF) transporter complex composed of 2 membrane-embedded substrate-binding proteins (S component), 2 ATP-binding proteins (A component) and 2 transmembrane proteins (T component).

It localises to the cell membrane. In terms of biological role, ATP-binding (A) component of a common energy-coupling factor (ECF) ABC-transporter complex. Unlike classic ABC transporters this ECF transporter provides the energy necessary to transport a number of different substrates. This is Energy-coupling factor transporter ATP-binding protein EcfA2 from Lactobacillus gasseri (strain ATCC 33323 / DSM 20243 / BCRC 14619 / CIP 102991 / JCM 1131 / KCTC 3163 / NCIMB 11718 / NCTC 13722 / AM63).